The following is a 641-amino-acid chain: Pre-mRNA-processing factor 39 (641 aa).

Residues 1-50 (MEKSPEHCAEGSPSPATESAPSATEPPLPSTEPPLPSTEPPLPSTEPPLP) are disordered. Positions 10-23 (EGSPSPATESAPSA) are enriched in low complexity. Residues 24–50 (TEPPLPSTEPPLPSTEPPLPSTEPPLP) are compositionally biased toward pro residues. 7 HAT repeats span residues 50–82 (PPLP…YVEQ), 84–116 (NHLF…LEKK), 118–150 (NNIL…FLKE), 158–193 (ETSL…WETE), 304–336 (NFEE…FELE), 338–370 (GSNE…YMEN), and 372–407 (SVEG…QQGN).

The protein belongs to the PRP39 family.

The protein resides in the nucleus. Functionally, involved in pre-mRNA splicing. The chain is Pre-mRNA-processing factor 39 (prpf39) from Xenopus laevis (African clawed frog).